We begin with the raw amino-acid sequence, 98 residues long: Large ribosomal subunit protein mL53 (98 aa).

It belongs to the mitochondrion-specific ribosomal protein mL53 family. As to quaternary structure, component of the mitochondrial large ribosomal subunit (mt-LSU). Mature N.crassa 74S mitochondrial ribosomes consist of a small (37S) and a large (54S) subunit. The 37S small subunit contains a 16S ribosomal RNA (16S mt-rRNA) and 32 different proteins. The 54S large subunit contains a 23S rRNA (23S mt-rRNA) and 42 different proteins.

The protein localises to the mitochondrion. In terms of biological role, component of the mitochondrial ribosome (mitoribosome), a dedicated translation machinery responsible for the synthesis of mitochondrial genome-encoded proteins, including at least some of the essential transmembrane subunits of the mitochondrial respiratory chain. The mitoribosomes are attached to the mitochondrial inner membrane and translation products are cotranslationally integrated into the membrane. In Neurospora crassa (strain ATCC 24698 / 74-OR23-1A / CBS 708.71 / DSM 1257 / FGSC 987), this protein is Large ribosomal subunit protein mL53 (mrpl44).